Reading from the N-terminus, the 351-residue chain is 5-deoxyribose 1-phosphate isomerase (351 aa).

Residues 48-50 (RGA), Arg91, and Gln198 contribute to the substrate site. Asp239 functions as the Proton donor in the catalytic mechanism. Position 249-250 (249-250 (NK)) interacts with substrate.

This sequence belongs to the EIF-2B alpha/beta/delta subunits family. DrdI subfamily.

It carries out the reaction 5-deoxy-alpha-D-ribose 1-phosphate = 5-deoxy-D-ribulose 1-phosphate. Its pathway is carbohydrate degradation. Its function is as follows. Catalyzes the isomerization of 5-deoxy-alpha-D-ribose 1-phosphate to 5-deoxy-D-ribulose 1-phosphate, as part of a 5-deoxyribose salvage pathway that recycles this toxic radical SAM enzyme by-product to mainstream metabolites. The protein is 5-deoxyribose 1-phosphate isomerase of Moorella thermoacetica (strain ATCC 39073 / JCM 9320).